A 785-amino-acid polypeptide reads, in one-letter code: MADLDSPQKLSGVPRPPDGVGGGSCSEISTELIRSLTDLQELEAVYERLCGEEKVVERELDALLEQQNTIESKMVTLHRMGPNLQLIEGDAKQLAGMITFTCNLAENVSSKVRQLDLAKNRLYQAIQRADDILDLKFCMDGVQTALRNEDYEQAAAHIHRYLCLDKSVIELSRQGKEGSMIDANLKLLQEAEQRLKAIVTEKFAVATKEGDLPQVERFFKIFPLLGLHEEGLSKFSEYLCKQVASKAEENLLLVLGTDMSDRRAAVIFADTLTLLFEGIARIVETHQPIVETYYGPGRLYTLIKYLQVECDRQVEKVVDKFIKQRDYRQQFRHVQSNLMRNSTSEKIEPRELDPILTEVTLMNARSELYLRFLRKRISSDFEVGDSMASEEVKQEHQKCLDKLLNNCLLSCTMQELIGLYITMEEYFMRETVNKAVALDTYEKGQLTSSMVDDVFYIVKKCIGRALSSSSIDCLCAMINLATTELESDFRDVLCHKLRMGFPATTLQDIQRGVTSAVSIMHSSLQQGKFDTKGIESTDEAKLSFLVTLNNVEVCSENISTLKKTLESDCTKLFSQGIGGEQAQAKFDSCLSDLAAVSGKFRDLLQEGLTELNSTAIKPQVQPWINTFLSVSHNIEEEEFSDYEANDPWVQQFILNLEQQMAEFKAGLSPVIYDSLTSLMTSLVAVELEKVVLKSTFNRLGGLQFDKELRSLIAYLTTVTTWTIRDKFARLSQMATILNLERVTEILDYWGANSGPLTWRLTPAEVRQVLALRIDFRSEDIKRLRL.

A disordered region spans residues 1 to 25 (MADLDSPQKLSGVPRPPDGVGGGSC). Residue Ala-2 is modified to N-acetylalanine. The interaction with SCFD1 stretch occupies residues 2–84 (ADLDSPQKLS…VTLHRMGPNL (83 aa)). Phosphoserine is present on Ser-6. An interaction with STX5 region spans residues 85–153 (QLIEGDAKQL…TALRNEDYEQ (69 aa)). The interval 618–740 (PQVQPWINTF…SQMATILNLE (123 aa)) is d domain. Residues 741–785 (RVTEILDYWGANSGPLTWRLTPAEVRQVLALRIDFRSEDIKRLRL) form an e domain; essential for proper cell surface glycosylation region.

Belongs to the COG4 family. In terms of assembly, monomer. Component of the conserved oligomeric Golgi (COG) complex which is composed of eight different subunits and is required for normal Golgi morphology and localization. Mediates interaction of SCFD1 with the COG complex. Interacts with STX5.

The protein resides in the cytoplasm. The protein localises to the cytosol. It localises to the golgi apparatus membrane. Its function is as follows. Required for normal Golgi function. Plays a role in SNARE-pin assembly and Golgi-to-ER retrograde transport via its interaction with SCFD1. The polypeptide is Conserved oligomeric Golgi complex subunit 4 (COG4) (Bos taurus (Bovine)).